Consider the following 207-residue polypeptide: Guanylate kinase (207 aa).

Residues 6–185 (GLLIVLSGPS…AKERIQSIVE (180 aa)) enclose the Guanylate kinase-like domain. ATP is bound at residue 13 to 20 (GPSGVGKG).

It belongs to the guanylate kinase family.

The protein localises to the cytoplasm. The enzyme catalyses GMP + ATP = GDP + ADP. Essential for recycling GMP and indirectly, cGMP. This Staphylococcus haemolyticus (strain JCSC1435) protein is Guanylate kinase.